Consider the following 51-residue polypeptide: Protein YrhD (51 aa).

The polypeptide is Protein YrhD (yrhD) (Escherichia coli (strain K12)).